The chain runs to 609 residues: Phosphoenolpyruvate carboxykinase [GTP] (609 aa).

Residues arginine 81 and 220–222 (YGG) contribute to the substrate site. 2 residues coordinate Mn(2+): lysine 229 and histidine 249. Serine 271 contacts substrate. 272-277 (ACGKTN) is a GTP binding site. Cysteine 273 is an active-site residue. Aspartate 296 lines the Mn(2+) pocket. Substrate is bound at residue 387-389 (NSR). GTP-binding positions include arginine 389, arginine 420, and 515 to 518 (FGEN).

It belongs to the phosphoenolpyruvate carboxykinase [GTP] family. Monomer. It depends on Mn(2+) as a cofactor.

Its subcellular location is the cytoplasm. The enzyme catalyses oxaloacetate + GTP = phosphoenolpyruvate + GDP + CO2. It functions in the pathway carbohydrate biosynthesis; gluconeogenesis. Functionally, catalyzes the conversion of oxaloacetate (OAA) to phosphoenolpyruvate (PEP), the rate-limiting step in the metabolic pathway that produces glucose from lactate and other precursors derived from the citric acid cycle. The protein is Phosphoenolpyruvate carboxykinase [GTP] of Mycobacterium ulcerans (strain Agy99).